Reading from the N-terminus, the 323-residue chain is Acetyl-coenzyme A carboxylase carboxyl transferase subunit alpha (323 aa).

In terms of domain architecture, CoA carboxyltransferase C-terminal spans 35–296; it reads EVLSELDELR…GMTLKKCLDE (262 aa).

This sequence belongs to the AccA family. As to quaternary structure, acetyl-CoA carboxylase is a heterohexamer composed of biotin carboxyl carrier protein (AccB), biotin carboxylase (AccC) and two subunits each of ACCase subunit alpha (AccA) and ACCase subunit beta (AccD).

Its subcellular location is the cytoplasm. It catalyses the reaction N(6)-carboxybiotinyl-L-lysyl-[protein] + acetyl-CoA = N(6)-biotinyl-L-lysyl-[protein] + malonyl-CoA. Its pathway is lipid metabolism; malonyl-CoA biosynthesis; malonyl-CoA from acetyl-CoA: step 1/1. Functionally, component of the acetyl coenzyme A carboxylase (ACC) complex. First, biotin carboxylase catalyzes the carboxylation of biotin on its carrier protein (BCCP) and then the CO(2) group is transferred by the carboxyltransferase to acetyl-CoA to form malonyl-CoA. The chain is Acetyl-coenzyme A carboxylase carboxyl transferase subunit alpha from Aquifex aeolicus (strain VF5).